The following is a 212-amino-acid chain: Redox-sensing transcriptional repressor Rex (212 aa).

The H-T-H motif DNA-binding region spans 18-57 (LYYRFVNTLKSKGIDRVNSKAISEALNIESATIRRDFSYF). Position 92-97 (92-97 (GVGNLG)) interacts with NAD(+).

The protein belongs to the transcriptional regulatory Rex family. As to quaternary structure, homodimer.

The protein localises to the cytoplasm. Functionally, modulates transcription in response to changes in cellular NADH/NAD(+) redox state. This is Redox-sensing transcriptional repressor Rex from Staphylococcus haemolyticus (strain JCSC1435).